Consider the following 294-residue polypeptide: Elongation factor Ts (294 aa).

The interval Thr-82 to Val-85 is involved in Mg(2+) ion dislocation from EF-Tu.

It belongs to the EF-Ts family.

It is found in the cytoplasm. Functionally, associates with the EF-Tu.GDP complex and induces the exchange of GDP to GTP. It remains bound to the aminoacyl-tRNA.EF-Tu.GTP complex up to the GTP hydrolysis stage on the ribosome. The sequence is that of Elongation factor Ts from Nitrosomonas eutropha (strain DSM 101675 / C91 / Nm57).